The sequence spans 114 residues: Iron-sulfur cluster insertion protein ErpA (114 aa).

Iron-sulfur cluster contacts are provided by Cys42, Cys106, and Cys108.

Belongs to the HesB/IscA family. In terms of assembly, homodimer. Iron-sulfur cluster serves as cofactor.

In terms of biological role, required for insertion of 4Fe-4S clusters for at least IspG. The protein is Iron-sulfur cluster insertion protein ErpA of Shigella boydii serotype 18 (strain CDC 3083-94 / BS512).